Reading from the N-terminus, the 7126-residue chain is Replicase polyprotein 1ab (7126 aa).

The CoV Nsp1 globular domain occupies 25–151 (RSDHVACTVP…EHTFLLRKNG (127 aa)). Residues 167–195 (TPYVEILDDLEADPTGKYSQNLLKKLIGG) form the BetaCoV Nsp1 C-terminal domain. Positions 197-472 (CIPVDQYMCG…WDKVVETANL (276 aa)) constitute a CoV Nsp2 N-terminal domain. Cys339, Cys342, Cys358, and Cys360 together coordinate Zn(2+). The segment at 339–360 (CNACGRGTWCTGNAIQGFACDC) is C4. The 235-residue stretch at 478–712 (QHSLNFCQQF…LDIMSKAMKL (235 aa)) folds into the CoV Nsp2 middle domain. The region spanning 714–847 (HTNVSWAGTK…VSTLFRLKGG (134 aa)) is the CoV Nsp2 C-terminal domain. The Ubiquitin-like 1 domain maps to 851–960 (KKVTFGDVNT…MTFSINPVED (110 aa)). A disordered region spans residues 1039–1061 (AQEPSVESTDSTPSTSTVVSEND). Positions 1041–1059 (EPSVESTDSTPSTSTVVSE) are enriched in low complexity. Macro domains follow at residues 1159 to 1328 (DLSK…KPDG) and 1329 to 1453 (LVYS…AIQT). The DPUP domain maps to 1453 to 1526 (TPETAFINNV…LEACRAYLTS (74 aa)). Positions 1531–1586 (QVNIEVLVTIDGVNFRTVILNDATTFRKQLGATFYKGVDISDALPTVKMGGESLFV) constitute a Ubiquitin-like 2 domain. A Peptidase C16 domain is found at 1600-1871 (EYYGTSDVTF…KVEVNPDLSN (272 aa)). Cys1641 (for PL-PRO activity) is an active-site residue. Residues Cys1721, Cys1724, Cys1756, and Cys1758 each contribute to the Zn(2+) site. A C4-type zinc finger spans residues 1721 to 1758 (CTVCGIRDIEYTGMRACVYAGVNSMEELQSVFNETCVC). Residues His1807 and Asp1822 each act as for PL-PRO activity in the active site. Positions 1885–2002 (TIKYSPATIL…QLYDVAPIVL (118 aa)) constitute a Nucleic acid-binding domain. The G2M domain maps to 2019 to 2140 (PNVPVVEDVS…AKITVTATTA (122 aa)). 3 helical membrane-spanning segments follow: residues 2119 to 2139 (VLLGASSLFASFAKITVTATT), 2152 to 2172 (FVVNYGVLQNMFLFLKMLFFL), and 2229 to 2249 (LFLLLCTTILLLSSIYHLVIF). Positions 2119 to 2402 (VLLGASSLFA…VTHIPLHGLV (284 aa)) are HD1. In terms of domain architecture, 3Ecto spans 2266–2332 (LAMYKEVRSY…LQMLQTHITS (67 aa)). Cystine bridges form between Cys2282-Cys2310 and Cys2300-Cys2307. A run of 3 helical transmembrane segments spans residues 2333–2353 (YVLNIDWIWFALEFFLAYVLY), 2357–2377 (FNVLLLVVTAQYFFAYTSAFV), and 2382–2402 (YNYIVSGLFFLVTHIPLHGLV). Residues 2416–2506 (KFYSHVINGC…TLRRLIKPTD (91 aa)) form a Y1 region. The 374-residue stretch at 2416 to 2789 (KFYSHVINGC…LSVKFSATKI (374 aa)) folds into the CoV Nsp3 Y domain. Residues His2420, Cys2425, Cys2430, Cys2433, Cys2466, His2469, Cys2473, and Cys2476 each coordinate Zn(2+). The tract at residues 2420–2433 (HVINGCKDTACLLC) is ZF1. The ZF2 stretch occupies residues 2466–2476 (CCKHNWNCVEC). The segment at 2507-2605 (QSHYYVDSVV…LVDVNLVTTV (99 aa)) is Y2. Positions 2507 to 2789 (QSHYYVDSVV…LSVKFSATKI (283 aa)) are coV-Y. Residues 2606–2688 (GDSREIAIKM…DALQYAHKND (83 aa)) form a Y3 region. The tract at residues 2689 to 2789 (IQLTTECYNN…LSVKFSATKI (101 aa)) is Y4. A run of 4 helical transmembrane segments spans residues 2807–2827 (GYCILTLFVFTVAVLSWFCLP), 3079–3099 (STSLAMGLVLCVFLTAAFYYI), 3112–3132 (CAVVAVVAALLNSLCLCFIVA), and 3156–3176 (AFIMHISWYVMFGTVVPIWML). Residues 2807-3176 (GYCILTLFVF…FGTVVPIWML (370 aa)) form an HD2 region. Residues 3202 to 3298 (VFTDGKLNCS…NCSVTSSVLQ (97 aa)) enclose the Nsp4C domain. The 306-residue stretch at 3299 to 3604 (SGLVKMSAPS…NMQVMGVVMQ (306 aa)) folds into the Peptidase C30 domain. Catalysis depends on for 3CL-PRO activity residues His3339 and Cys3446. The next 7 helical transmembrane spans lie at 3610–3630 (ISYGFMHWLMSTLVLAYVSVM), 3644–3664 (TIPTQMTPLLFGFMACVMFTV), 3669–3689 (TFLSLFLLPVALCLTYANIVY), 3714–3734 (RTTHLDFGLYISLSFVLAIIV), 3742–3762 (MSNLALALCSGVMWFYTYVIG), 3791–3811 (LAKFISGLVFLYAPHLGFILP), and 3815–3835 (LVLLIYLCLGYMCTMYFGVFS). The tract at residues 3610 to 3835 (ISYGFMHWLM…MCTMYFGVFS (226 aa)) is HD3. A RdRp Nsp7 cofactor domain is found at 3897–3979 (SKLTDLKCTS…DLFENSSVLQ (83 aa)). The region spanning 3980–4178 (ATLTEFSHLA…RASSSAVKLQ (199 aa)) is the RdRp Nsp8 cofactor domain. Residues 4179–4288 (NNEIHPKGLK…GHIAATVRLQ (110 aa)) form the Nsp9 ssRNA-binding domain. Residues 4289-4427 (AGANTEFASN…DALRNNTVPQ (139 aa)) enclose the ExoN/MTase coactivator domain. Zn(2+) contacts are provided by Cys4362, Cys4365, His4371, Cys4378, Cys4404, Cys4407, Cys4415, and Cys4417. 2 zinc fingers span residues 4362–4378 (CLYCRAHIEHPDVSGVC) and 4404–4417 (CNVCQYWVGYGCNC). The region spanning 4433-4690 (FLNRVRGSSV…AAETHKDCDF (258 aa)) is the NiRAN domain. Mn(2+)-binding residues include Asn4638 and Asp4647. Residues 4695 to 4793 (IEWLLLEYDY…MNMDVNIHRH (99 aa)) enclose the Nsp12 Interface domain. Residues His4724, Cys4730, Cys4735, Cys4739, and Cys4916 each coordinate Zn(2+). Residues 4794 to 5361 (RLALKELMMY…DLYSSPTTLQ (568 aa)) enclose the Nsp12 RNA-dependent RNA polymerase domain. The interval 4796-5010 (ALKELMMYAA…HQKMLKSMAA (215 aa)) is rdRp Fingers N-ter. Residues 5011-5049 (TRGATCVIGTTKFYGGWDFMLKTLYKDVESPHLMGWDYP) form a rdRp Palm N-ter region. In terms of domain architecture, RdRp catalytic spans 5041 to 5203 (PHLMGWDYPK…CYNSDYAAKG (163 aa)). A rdRp Fingers C-ter region spans residues 5050–5108 (KCDRAMPNMCRILASLILARKHSTCCTNSDRFYRLANECAQVLSEYVLCGGGYYVKPGG). Residues His5071, Cys5074, and Cys5075 each contribute to the Zn(2+) site. Residues 5109–5244 (TSSGDATTAY…EKGPHEFCSQ (136 aa)) are rdRp Palm C-ter. Active-site residues include Ser5188, Asp5189, and Asp5190. Residues 5245–5361 (HTLYIKDGDD…DLYSSPTTLQ (117 aa)) form a rdRp Thumb region. Residues 5362–5474 (AVGSCVVCHS…MEFNRLATCD (113 aa)) enclose the CV ZBD domain. Residues Cys5366, Cys5369, Cys5377, Cys5380, Cys5387, Cys5390, His5394, His5400, Cys5411, Cys5416, Cys5433, and His5436 each contribute to the Zn(2+) site. The (+)RNA virus helicase ATP-binding domain occupies 5618 to 5799 (TVPEEFANHV…MCNLGPDIFL (182 aa)). 5643–5650 (GPPGTGKS) is an ATP binding site. Residues 5800-5974 (SVCYRCPKEI…GLFKDCSRED (175 aa)) enclose the (+)RNA virus helicase C-terminal domain. In terms of domain architecture, ExoN spans 6031–6246 (LFITRDEAIR…RCLAIYDCFI (216 aa)). Catalysis depends on residues Asp6049, Glu6051, and Glu6150. Positions 6166, 6169, 6185, 6188, 6216, 6220, and 6223 each coordinate Zn(2+). Active-site residues include His6227 and Asp6232. Residue Cys6238 coordinates Zn(2+). In terms of domain architecture, N7-MTase spans 6255 to 6482 (YPYISHEQKL…NLWSTFVKVQ (228 aa)). Position 6290–6296 (6290–6296 (DIGNPKG)) interacts with S-adenosyl-L-methionine. The interval 6368-6382 (CNGGSLYVNKHAFHT) is gpppA-binding. 4 residues coordinate Zn(2+): Cys6406, Cys6428, Cys6439, and His6442. One can recognise a Nsp15 N-terminal oligomerization domain in the interval 6483 to 6543 (GLENIAFNVI…NVAFELYAKR (61 aa)). The AV-Nsp11N/CoV-Nsp15M domain maps to 6544–6665 (AVRSHPDLNL…LYKKVNNEFV (122 aa)). In terms of domain architecture, NendoU spans 6682-6821 (TALTPMEEDF…KDGKVQTFYP (140 aa)). Catalysis depends on residues His6712, His6727, Lys6767, Lys6870, Asp6954, Lys6994, and Glu7027. Residues 6826 to 7120 (TNDWKPGLTM…TLNVSTDVLV (295 aa)) form the Nidovirus-type SAM-dependent 2'-O-MTase domain.

This sequence belongs to the coronaviruses polyprotein 1ab family. In terms of assembly, interacts with host PHB and PHB2. Interacts with papain-like protease nsp3 and non-structural protein 6. As to quaternary structure, monomer. Homodimer. Only the homodimer shows catalytic activity. In terms of assembly, interacts with nsp8 and nsp12 to form the replication-transcription complex (RTC): nsp12, nsp7, two subunits of nsp8, and up to two subunits of nsp13. Interacts with nsp7, nsp13 and nsp12 to form the replication-transcription complex (RTC): nsp12, nsp7, two subunits of nsp8, and up to two subunits of nsp13. As to quaternary structure, interacts with nsp12. In terms of assembly, interacts with proofreading exoribonuclease nsp14 and 2'-O-methyltransferase nsp16; these interactions enhance nsp14 and nsp16 enzymatic activities. Interacts with nsp7 and nsp8 to form the replication-transcription complex (RTC): nsp12, nsp7, two subunits of nsp8, and up to two subunits of nsp13. Interacts with nsp9. As to quaternary structure, interacts with nsp8 to form the replication-transcription complex (RTC): nsp12, nsp7, two subunits of nsp8, and up to two subunits of nsp13. The cofactor is Mn(2+). Mg(2+) serves as cofactor. In terms of processing, specific enzymatic cleavages in vivo by its own proteases yield mature proteins. 3CL-PRO and PL-PRO proteinases are autocatalytically processed.

It is found in the host membrane. It localises to the host cytoplasm. The protein localises to the host perinuclear region. Its subcellular location is the host endoplasmic reticulum-Golgi intermediate compartment. The catalysed reaction is ATP + H2O = ADP + phosphate + H(+). It carries out the reaction RNA(n) + a ribonucleoside 5'-triphosphate = RNA(n+1) + diphosphate. It catalyses the reaction Thiol-dependent hydrolysis of ester, thioester, amide, peptide and isopeptide bonds formed by the C-terminal Gly of ubiquitin (a 76-residue protein attached to proteins as an intracellular targeting signal).. The enzyme catalyses a 5'-end (N(7)-methyl 5'-triphosphoguanosine)-ribonucleoside in mRNA + S-adenosyl-L-methionine = a 5'-end (N(7)-methyl 5'-triphosphoguanosine)-(2'-O-methyl-ribonucleoside) in mRNA + S-adenosyl-L-homocysteine + H(+). The catalysed reaction is uridylyl-uridylyl-ribonucleotide-RNA = a 3'-end uridylyl-2',3'-cyclophospho-uridine-RNA + a 5'-end dephospho-ribonucleoside-RNA. It carries out the reaction a 5'-end diphospho-ribonucleoside in mRNA + GTP + H(+) = a 5'-end (5'-triphosphoguanosine)-ribonucleoside in mRNA + diphosphate. It catalyses the reaction a 5'-end (5'-triphosphoguanosine)-ribonucleoside in mRNA + S-adenosyl-L-methionine = a 5'-end (N(7)-methyl 5'-triphosphoguanosine)-ribonucleoside in mRNA + S-adenosyl-L-homocysteine. Its function is as follows. The replicase polyprotein of coronaviruses is a multifunctional protein: it contains the activities necessary for the transcription of negative stranded RNA, leader RNA, subgenomic mRNAs and progeny virion RNA as well as proteinases responsible for the cleavage of the polyprotein into functional products. Functionally, inhibits host translation by interacting with the 40S ribosomal subunit. The nsp1-40S ribosome complex further induces an endonucleolytic cleavage near the 5'UTR of host mRNAs, targeting them for degradation. Viral mRNAs are not susceptible to nsp1-mediated endonucleolytic RNA cleavage thanks to the presence of a 5'-end leader sequence and are therefore protected from degradation. By suppressing host gene expression, nsp1 facilitates efficient viral gene expression in infected cells and evasion from host immune response. May play a role in the modulation of host cell survival signaling pathway by interacting with host PHB and PHB2. Indeed, these two proteins play a role in maintaining the functional integrity of the mitochondria and protecting cells from various stresses. In terms of biological role, responsible for the cleavages located at the N-terminus of the replicase polyprotein. In addition, PL-PRO possesses a deubiquitinating/deISGylating activity and processes both 'Lys-48'- and 'Lys-63'-linked polyubiquitin chains from cellular substrates. Participates together with nsp4 in the assembly of virally-induced cytoplasmic double-membrane vesicles necessary for viral replication. Antagonizes innate immune induction of type I interferon by blocking the phosphorylation, dimerization and subsequent nuclear translocation of host IRF3. Also prevents host NF-kappa-B signaling. Its function is as follows. Participates in the assembly of virally-induced cytoplasmic double-membrane vesicles necessary for viral replication. Functionally, cleaves the C-terminus of replicase polyprotein at 11 sites. Recognizes substrates containing the core sequence [ILMVF]-Q-|-[SGACN]. Also able to bind an ADP-ribose-1''-phosphate (ADRP). Plays a role in the initial induction of autophagosomes from host endoplasmic reticulum. Later, limits the expansion of these phagosomes that are no longer able to deliver viral components to lysosomes. In terms of biological role, forms a hexadecamer with nsp8 (8 subunits of each) that may participate in viral replication by acting as a primase. Alternatively, may synthesize substantially longer products than oligonucleotide primers. Its function is as follows. Forms a hexadecamer with nsp7 (8 subunits of each) that may participate in viral replication by acting as a primase. Alternatively, may synthesize substantially longer products than oligonucleotide primers. Functionally, forms a primer, NSP9-pU, which is utilized by the polymerase for the initiation of RNA chains. Interacts with ribosome signal recognition particle RNA (SRP). Together with NSP8, suppress protein integration into the cell membrane, thereby disrupting host immune defenses. Plays a pivotal role in viral transcription by stimulating both nsp14 3'-5' exoribonuclease and nsp16 2'-O-methyltransferase activities. Therefore plays an essential role in viral mRNAs cap methylation. In terms of biological role, RNA-directed RNA polymerase that catalyzes the transcription of viral genomic and subgenomic RNAs. Acts in complex with nsp7 and nsp8 to transcribe both the minus and positive strands of genomic RNA. The kinase-like NiRAN domain of NSP12 attaches one or more nucleotides to the amino terminus of NSP9, forming a covalent RNA-protein intermediate that serves as transcription/replication primer. Subgenomic RNAs (sgRNAs) are formed by discontinuous transcription: The polymerase has the ability to pause at transcription-regulating sequences (TRS) and jump to the leader TRS, resulting in a major deletion. This creates a series of subgenomic RNAs that are replicated, transcribed and translated. In addition, Nsp12 is a subunit of the viral RNA capping enzyme that catalyzes the RNA guanylyltransferase reaction for genomic and sub-genomic RNAs. Subsequently, the NiRAN domain transfers RNA to GDP, and forms the core cap structure GpppA-RNA. Its function is as follows. Multi-functional protein with a zinc-binding domain in N-terminus displaying RNA and DNA duplex-unwinding activities with 5' to 3' polarity. Activity of helicase is dependent on magnesium. Functionally, plays a role in viral RNA synthesis through two distinct activities. The N7-guanine methyltransferase activity plays a role in the formation of the cap structure GpppA-RNA. The proofreading exoribonuclease reduces the sensitivity of the virus to RNA mutagens during replication. This activity acts on both ssRNA and dsRNA in a 3'-5' direction. Plays a role in viral transcription/replication and prevents the simultaneous activation of host cell dsRNA sensors, such as MDA5/IFIH1, OAS, and PKR. Acts by degrading the 5'-polyuridines generated during replication of the poly(A) region of viral genomic and subgenomic RNAs. Catalyzes a two-step reaction in which a 2'3'-cyclic phosphate (2'3'-cP) is first generated by 2'-O transesterification, which is then hydrolyzed to a 3'-phosphate (3'-P). If not degraded, poly(U) RNA would hybridize with poly(A) RNA tails and activate host dsRNA sensors. In terms of biological role, methyltransferase that mediates mRNA cap 2'-O-ribose methylation to the 5'-cap structure of viral mRNAs. N7-methyl guanosine cap is a prerequisite for binding of nsp16. Therefore plays an essential role in viral mRNAs cap methylation which is essential to evade immune system. The polypeptide is Replicase polyprotein 1ab (rep) (Bat coronavirus 133/2005 (BtCoV)).